Consider the following 432-residue polypeptide: FMRFamide peptide receptor frpr-18 (432 aa).

At 1–8 (MESQQLMA) the chain is on the extracellular side. The chain crosses the membrane as a helical span at residues 9-29 (CAILVIVLVGIFGNSLSFILF). Residues 30-42 (SRPHMRSSSVNVL) are Cytoplasmic-facing. A helical transmembrane segment spans residues 43-63 (LCALSFFDFSLLTLSIPIFVI). Residues 64-84 (PNLDLWANDLSLSTYMAYILK) are Extracellular-facing. The chain crosses the membrane as a helical span at residues 85-105 (LIYPINLMMQTCSVYIMVMIT). The Cytoplasmic segment spans residues 106 to 128 (LERWVAVCRPLQVRVWCTPRKSR). A helical transmembrane segment spans residues 129–149 (NAILVIIVSAFLYNFVRFFEY). Residues 150–176 (RFVVTESGALYEKWLRDPGKHRWYYVG) are Extracellular-facing. A helical transmembrane segment spans residues 177–197 (YYTILYIVTHFLVPFSVMAFA). The Cytoplasmic segment spans residues 198 to 225 (NGHVIVAMCKLSKTRQMLTRQQQREQST). A helical transmembrane segment spans residues 226–246 (TVMLLIVTFVFAICNTLPFLL). Topologically, residues 247 to 271 (NVSESIFPTLFQDESTRGLAYWLND) are extracellular. The helical transmembrane segment at 272–292 (LSNLLVVLNSGTTFIIYFTFS) threads the bilayer. The Cytoplasmic portion of the chain corresponds to 293-432 (EKYRQTLVFI…GEPDSPCQPC (140 aa)). Disordered stretches follow at residues 328–349 (ISSE…SSRS) and 388–411 (KLPS…GMPE).

It belongs to the G-protein coupled receptor 1 family. In terms of tissue distribution, expressed in a subset of neurons in the head, midbody, and tail, including AIY, ASI, BAG, URA, CAN, I6, PVQ, DVA, RIM, and VC, and in the anal sphincter and intestinal muscles. Expression from the ASI neurons is involved in promoting arousal.

The protein resides in the cell membrane. Functionally, G-protein coupled receptor for flp-2 neuropeptides. May act through the G(q) alpha type of G proteins. Involved in mediating arousal from the sleep-like state called lethargus, which occurs during molting between larval and adult stages, in part by regulating touch sensitivity, and working in concert with neuropeptide pdf-1. This is FMRFamide peptide receptor frpr-18 from Caenorhabditis elegans.